The primary structure comprises 88 residues: Small cysteine-rich outer membrane protein OmcA (88 aa).

The first 18 residues, 1 to 18 (MKKTALLAALCSVVSLSS), serve as a signal peptide directing secretion. The N-palmitoyl cysteine moiety is linked to residue cysteine 19. Residue cysteine 19 is the site of S-diacylglycerol cysteine attachment. The segment at 67–88 (THQDAEHGPQAREIPVDGKCRQ) is disordered.

As to quaternary structure, part of a disulfide cross-linked outer membrane complex (COMC) composed of the major outer membrane porin (MOMP), the small cysteine-rich protein (OmcA) and the large cysteine-rich periplasmic protein (OmcB).

Its subcellular location is the cell outer membrane. In elementary bodies (EBs, the infectious stage, which is able to survive outside the host cell) provides the structural integrity of the outer envelope through disulfide cross-links with the large cysteine-rich periplasmic protein and the major outer membrane porin. It has been described in publications as the Sarkosyl-insoluble COMC (Chlamydia outer membrane complex), and serves as the functional equivalent of peptidoglycan. This is Small cysteine-rich outer membrane protein OmcA (omcA) from Chlamydia trachomatis serovar L2 (strain ATCC VR-902B / DSM 19102 / 434/Bu).